Here is a 446-residue protein sequence, read N- to C-terminus: Phosphoglucosamine mutase (446 aa).

Ser103 acts as the Phosphoserine intermediate in catalysis. Mg(2+)-binding residues include Ser103, Asp242, Asp244, and Asp246. A Phosphoserine modification is found at Ser103.

The protein belongs to the phosphohexose mutase family. Requires Mg(2+) as cofactor. Activated by phosphorylation.

It catalyses the reaction alpha-D-glucosamine 1-phosphate = D-glucosamine 6-phosphate. Functionally, catalyzes the conversion of glucosamine-6-phosphate to glucosamine-1-phosphate. The chain is Phosphoglucosamine mutase from Corynebacterium urealyticum (strain ATCC 43042 / DSM 7109).